The following is a 265-amino-acid chain: Undecaprenyl-diphosphatase (265 aa).

7 helical membrane passes run 38–58 (SDMFNIVIQAGAILAVTIIYW), 80–100 (LIVAFLITAILGLVVKKLGFE), 107–127 (PIAWALIIGGIWMIFAEWAAA), 135–155 (ITWLVAILVGIAQIVAGVFPG), 175–195 (AAATEFAFLVGIPTMYAASGY), 213–233 (ALAIAFVVSTIVAFIAVKWLL), and 244–264 (FAIYRIILGVLLLGMTATGMI).

This sequence belongs to the UppP family.

It is found in the cell inner membrane. It catalyses the reaction di-trans,octa-cis-undecaprenyl diphosphate + H2O = di-trans,octa-cis-undecaprenyl phosphate + phosphate + H(+). Its function is as follows. Catalyzes the dephosphorylation of undecaprenyl diphosphate (UPP). Confers resistance to bacitracin. This is Undecaprenyl-diphosphatase from Rhizobium etli (strain ATCC 51251 / DSM 11541 / JCM 21823 / NBRC 15573 / CFN 42).